The following is a 655-amino-acid chain: p-hydroxybenzoic acid efflux pump subunit AaeB (655 aa).

11 helical membrane-spanning segments follow: residues 13 to 33 (FAVK…HFQL), 38 to 58 (WAVL…GGEP), 67 to 89 (GFLR…IAMI), 93 to 112 (LLMI…ISSL), 121 to 141 (WGLA…EPLL), 152 to 172 (EIVI…PRSI), 370 to 390 (LFWL…IAVV), 407 to 427 (FIYG…VIIP), 431 to 451 (QSML…GIEV), 459 to 479 (MGAL…TFHF), and 482 to 502 (FLDS…VILL).

This sequence belongs to the aromatic acid exporter ArAE (TC 2.A.85) family.

Its subcellular location is the cell inner membrane. In terms of biological role, forms an efflux pump with AaeA. Could function as a metabolic relief valve, allowing to eliminate certain compounds when they accumulate to high levels in the cell. This Escherichia coli O9:H4 (strain HS) protein is p-hydroxybenzoic acid efflux pump subunit AaeB.